Consider the following 466-residue polypeptide: 3-isopropylmalate dehydratase large subunit (466 aa).

[4Fe-4S] cluster-binding residues include cysteine 347, cysteine 407, and cysteine 410.

The protein belongs to the aconitase/IPM isomerase family. LeuC type 1 subfamily. In terms of assembly, heterodimer of LeuC and LeuD. Requires [4Fe-4S] cluster as cofactor.

The enzyme catalyses (2R,3S)-3-isopropylmalate = (2S)-2-isopropylmalate. Its pathway is amino-acid biosynthesis; L-leucine biosynthesis; L-leucine from 3-methyl-2-oxobutanoate: step 2/4. Its function is as follows. Catalyzes the isomerization between 2-isopropylmalate and 3-isopropylmalate, via the formation of 2-isopropylmaleate. The polypeptide is 3-isopropylmalate dehydratase large subunit (Vibrio vulnificus (strain YJ016)).